A 644-amino-acid polypeptide reads, in one-letter code: MTPPPATGKPSSSLLDRVSSPADIRDFSIEELEQLTYEVRQEMIQSVSFTGGHLGAGLGVAELTVALHHIFDTPRDRLIWDVGHQAYPHKILTGRRGRMRTMRQGGGLSGFTRRSESEYDPFGAGHSSTSISAALGMAVARDLKGATNNVIAVIGDGAMSAGQAYEAMNNAGAAGSRLIVILNDNDMSIAPPVGALSAHLSRLLSSPSYHSLRHLVKDLAHLLPPSLERAVGRAEEYARGMVSGGGTLFEELGFYYVGPIDGHNFEHLLPVLKNLRDSDDTKPVMLHVVTKKGRGYPPAEAAADKYHGVGRFDVLTGQLEKPKANAPSYTSVFAKALIAEAEVDDRVVAITAAMPGGTGLDKFGDRFPARTFDVGIAEQHAVTFAGGLATEGFKPFCAIYSSFLQRAYDQVQHDVVLQKLPVRFAIDRAGLVGADGATHAGSYDMAFLGCLPDIVIMCPSDEADLMHAVATAVSIDDRPSAFRYPRGEGVGIELSERGSVMPIGKGRVVREGNRVAILSLGTRLAEALKAADELAARGLAPTVVDARFMKPLDEELILRLAREHEVLITVEEGSVGGFGSHVLHLLASKGALDNGLKVRPLALPDVFVEHDAPAIQYEKIGLNASGIVATVLATLGEARSVVSA.

Thiamine diphosphate-binding positions include His84 and 125–127; that span reads GHS. Residue Asp156 coordinates Mg(2+). Thiamine diphosphate-binding positions include 157–158, Asn185, Tyr296, and Glu378; that span reads GA. Asn185 serves as a coordination point for Mg(2+).

Belongs to the transketolase family. DXPS subfamily. In terms of assembly, homodimer. Mg(2+) is required as a cofactor. Requires thiamine diphosphate as cofactor.

The catalysed reaction is D-glyceraldehyde 3-phosphate + pyruvate + H(+) = 1-deoxy-D-xylulose 5-phosphate + CO2. It functions in the pathway metabolic intermediate biosynthesis; 1-deoxy-D-xylulose 5-phosphate biosynthesis; 1-deoxy-D-xylulose 5-phosphate from D-glyceraldehyde 3-phosphate and pyruvate: step 1/1. Its function is as follows. Catalyzes the acyloin condensation reaction between C atoms 2 and 3 of pyruvate and glyceraldehyde 3-phosphate to yield 1-deoxy-D-xylulose-5-phosphate (DXP). This chain is 1-deoxy-D-xylulose-5-phosphate synthase, found in Paramagnetospirillum magneticum (strain ATCC 700264 / AMB-1) (Magnetospirillum magneticum).